A 522-amino-acid polypeptide reads, in one-letter code: MSQLNLIPFFCVIIVLSVEDFPLYTIPEKIGPWTPIDLIHLSCPNNLQSEDEGCGTSSVFSYVELKTGYLTHQKVSGFTCTGVVNEAVTYTNFVGYVTTTFKRKHFKPTALACRDAYHWKISGDPRYEESLHTPYPDNSWLRTVTTTKESLVIISPSIVEMDVYSRTLHSPMFPTGTCSRFYPSSPSCATNHDYTLWLPDDPNLSLACDIFVTSTGKKSMNGSRMCGFTDERGYYRTIKGACKLTLCGKPGLRLFDGTWISFPRPEVTTRCLPNQLVNIHNNRIDEVEHLIVEDLIRKREECLDTLETVLMSKSISFRRLSHFRKLVPGYGKAYTILNGSLMETNVHYLKVDNWSEILPSKGCLKINNQCVAHYKGVFFNGIIKGPDGHILIPEMQSSLLKQHMDLLKAAVFPLKHPLIEPGSLFNKDGDADEFVDVHMPDVHKLVSDVDLGLPDWSLYALIGATIIAFFILICLIRICCKKGGRRNSPTNRPDLPIGLSTTPQPKSKVISSWESYKGTSNV.

The N-terminal stretch at 1 to 25 (MSQLNLIPFFCVIIVLSVEDFPLYT) is a signal peptide. The Virion surface portion of the chain corresponds to 26-455 (IPEKIGPWTP…VSDVDLGLPD (430 aa)). Residues 456–476 (WSLYALIGATIIAFFILICLI) traverse the membrane as a helical segment. Residues 477 to 522 (RICCKKGGRRNSPTNRPDLPIGLSTTPQPKSKVISSWESYKGTSNV) are Intravirion-facing. C480 carries S-palmitoyl cysteine; by host lipidation.

The protein belongs to the lyssavirus glycoprotein family. In terms of assembly, homotrimer. Interacts with matrix protein. In terms of processing, glycosylated and palmitoylated by host. Glycosylation is crucial for glycoprotein export at the cell surface.

It is found in the virion membrane. Attaches the virus to host cellular receptor, inducing endocytosis of the virion. In the endosome, the acidic pH induces conformational changes in the glycoprotein trimer, which trigger fusion between virus and cell membrane. The polypeptide is Glycoprotein (G) (Homo sapiens (Human)).